A 270-amino-acid polypeptide reads, in one-letter code: NAD kinase (270 aa).

Catalysis depends on D45, which acts as the Proton acceptor. NAD(+) contacts are provided by residues 45–46, 121–122, R147, D149, 160–165, and A184; these read DG, NE, and TAYNKS.

It belongs to the NAD kinase family. A divalent metal cation is required as a cofactor.

Its subcellular location is the cytoplasm. The enzyme catalyses NAD(+) + ATP = ADP + NADP(+) + H(+). Functionally, involved in the regulation of the intracellular balance of NAD and NADP, and is a key enzyme in the biosynthesis of NADP. Catalyzes specifically the phosphorylation on 2'-hydroxyl of the adenosine moiety of NAD to yield NADP. This Limosilactobacillus reuteri subsp. reuteri (strain JCM 1112) (Lactobacillus reuteri) protein is NAD kinase.